The sequence spans 369 residues: Glutamine synthetase (369 aa).

A GS beta-grasp domain is found at 23–102 (VIAEYIWVDS…VLAECWNNDG (80 aa)). The GS catalytic domain occupies 109–369 (HRHEAAKLFE…MSKEFERESS (261 aa)).

This sequence belongs to the glutamine synthetase family. In terms of assembly, homooctamer.

The protein localises to the cytoplasm. The catalysed reaction is L-glutamate + NH4(+) + ATP = L-glutamine + ADP + phosphate + H(+). In Eremothecium gossypii (strain ATCC 10895 / CBS 109.51 / FGSC 9923 / NRRL Y-1056) (Yeast), this protein is Glutamine synthetase (GLN1).